Here is a 93-residue protein sequence, read N- to C-terminus: Defensin-like protein 209 (93 aa).

Residues 1-19 form the signal peptide; that stretch reads MKITILFLTLLVLSSSCTS. Disulfide bonds link cysteine 63–cysteine 80, cysteine 66–cysteine 85, and cysteine 70–cysteine 87.

The protein belongs to the DEFL family.

The protein localises to the secreted. The polypeptide is Defensin-like protein 209 (Arabidopsis thaliana (Mouse-ear cress)).